A 452-amino-acid chain; its full sequence is Cell division protein FtsZ (452 aa).

GTP is bound by residues 24–28 (GAGSN), 111–113 (GTG), glutamate 142, arginine 146, and aspartate 190. The interval 432–452 (DQDNKESDIHDIPAFLRKKRD) is disordered. Residues 433 to 442 (QDNKESDIHD) are compositionally biased toward basic and acidic residues.

It belongs to the FtsZ family. Homodimer. Polymerizes to form a dynamic ring structure in a strictly GTP-dependent manner. Interacts directly with several other division proteins.

Its subcellular location is the cytoplasm. Functionally, essential cell division protein that forms a contractile ring structure (Z ring) at the future cell division site. The regulation of the ring assembly controls the timing and the location of cell division. One of the functions of the FtsZ ring is to recruit other cell division proteins to the septum to produce a new cell wall between the dividing cells. Binds GTP and shows GTPase activity. This is Cell division protein FtsZ from Rickettsia conorii (strain ATCC VR-613 / Malish 7).